The sequence spans 74 residues: Metallothionein-like protein type 2 (74 aa).

This sequence belongs to the metallothionein superfamily. Type 15 family.

Metallothioneins have a high content of cysteine residues that bind various heavy metals. This chain is Metallothionein-like protein type 2, found in Nicotiana plumbaginifolia (Leadwort-leaved tobacco).